The following is a 153-amino-acid chain: Small ribosomal subunit protein eS19 (153 aa).

Disordered regions lie at residues 77–99 (YGTS…KGSG) and 113–139 (GYVE…TAGD). A compositionally biased stretch (basic and acidic residues) spans 120-133 (NDGRRVTGDGRSLL).

The protein belongs to the eukaryotic ribosomal protein eS19 family. As to quaternary structure, part of the 30S ribosomal subunit.

Functionally, may be involved in maturation of the 30S ribosomal subunit. The sequence is that of Small ribosomal subunit protein eS19 from Haloarcula marismortui (strain ATCC 43049 / DSM 3752 / JCM 8966 / VKM B-1809) (Halobacterium marismortui).